The sequence spans 201 residues: Recombination protein RecR (201 aa).

The C4-type zinc finger occupies cysteine 60–cysteine 75. The Toprim domain occupies serine 83–proline 177.

This sequence belongs to the RecR family.

Functionally, may play a role in DNA repair. It seems to be involved in an RecBC-independent recombinational process of DNA repair. It may act with RecF and RecO. In Francisella philomiragia subsp. philomiragia (strain ATCC 25017 / CCUG 19701 / FSC 153 / O#319-036), this protein is Recombination protein RecR.